The chain runs to 156 residues: MKLLLIAVGQRLPAWADTAYEDYAKRFPPDLRLELKAVKTEARTTGKPVEALMAAEKTRIEAALPRGCRRVVLDEHGQRVTTAQLAERLAVWQRDGRDVALLVGGPDGLDQTLRDGADEKLRLSDLTLPHAFVRVMLAEALYRAWTLSIGHPYHRE.

S-adenosyl-L-methionine-binding positions include Leu-73, Gly-104, and 123–128; that span reads LSDLTL.

This sequence belongs to the RNA methyltransferase RlmH family. As to quaternary structure, homodimer.

Its subcellular location is the cytoplasm. The catalysed reaction is pseudouridine(1915) in 23S rRNA + S-adenosyl-L-methionine = N(3)-methylpseudouridine(1915) in 23S rRNA + S-adenosyl-L-homocysteine + H(+). Specifically methylates the pseudouridine at position 1915 (m3Psi1915) in 23S rRNA. The protein is Ribosomal RNA large subunit methyltransferase H of Leptothrix cholodnii (strain ATCC 51168 / LMG 8142 / SP-6) (Leptothrix discophora (strain SP-6)).